Consider the following 286-residue polypeptide: Perivitellin-2 31 kDa subunit (286 aa).

A signal peptide spans 1–30; the sequence is MVKKIHFVMERHASIVAFLLAVLALTESQA. N101 is a glycosylation site (N-linked (GlcNAc...) asparagine).

It belongs to the tectonin family. As to quaternary structure, perivitellin-2 is a dimer of heterodimers held together head-to-tail by non-covalent forces. The heterodimer is composed of the tachylectin subunit (31 kDa) and the MACPF subunit (67 kDa) that are disulfide-linked. PV2 is a very high density lipoprotein (VHDL). It contains 3.75% of lipids. The major lipid classes are free sterols and phospholipids and also have significant quantities of energy-providing triacylglycerides and free fatty acids. Produced by albumen secretory cells. Found in developing eggs.

The protein resides in the secreted. The protein localises to the target cell membrane. In terms of biological role, the egg defensive protein perivitellin-2 is a pore-forming two-subunit glycoprotein that affects both the nervous and digestive systems of mammals. In addition, it is a source of both structural and energetic molecules during embryonic development. The tachylectin subunit (31 kDa) binds target membranes while the MACPF subunit (67 kDa) disrupts lipid bilayers forming large pores (inner diameter of about 5.6 nm) altering the plasma membrance conductance. Both in vivo and in vitro, the protein shows wide pH range stability and is resistant to enzymatic proteolysis from gastrointestinal environments. It is cytotoxic to both epithelial and immune cells from the digestive system of mammals. It induces enterocyte death by a lytic mechanism and disrupts enterocyte monolayers in a dose-dependent manner. After oral administration to mice, it binds enterocytes and induces large dose-dependent morphological changes on their small intestine mucosa, reducing the absorptive surface. Additionally, it is detected in the Peyer's patches where it activates lymphoid follicles and triggers apoptosis. The toxin can also traverse the intestinal barrier and induce oral adaptive immunity with evidence of circulating antibody response. The toxin also shows hemagglutination properties thanks to the tachylectin subunit, but has no hemolytic activity. In addition to enterotoxin activity, the toxin also acts as a neurotoxin, since an intraperitoneal injection can induce paralysis of the mice rear limbs, followed by death. This chain is Perivitellin-2 31 kDa subunit, found in Pomacea maculata (Giant applesnail).